Reading from the N-terminus, the 1809-residue chain is Putative 1-phosphatidylinositol 3-phosphate 5-kinase (1809 aa).

Residues 1–12 (MTSNNQNNSSSH) are compositionally biased toward low complexity. 2 disordered regions span residues 1–20 (MTSN…SPSK) and 84–146 (TSTA…TSEA). Residues 84 to 127 (TSTAEIADVETSSQSSVRPQPPTTLSIRTNSETRGTSTSSNTAA) show a composition bias toward polar residues. An FYVE-type zinc finger spans residues 186–246 (DSKAKECYDC…VCNYCSKIVL (61 aa)). Zn(2+) contacts are provided by cysteine 192, cysteine 195, cysteine 208, cysteine 211, cysteine 216, cysteine 219, cysteine 238, and cysteine 241. Disordered regions lie at residues 274-300 (QDSG…VGYQ) and 399-444 (KSSS…ELEN). Residues 323–399 (QQSNSLITLH…DSSLHYKFSK (77 aa)) enclose the DEP domain. Residues 399–410 (KSSSSDTSRTMS) show a composition bias toward low complexity. Residues 431–444 (AEEKEKELENELEN) show a composition bias toward basic and acidic residues. A Phosphoserine modification is found at serine 755. Residue threonine 760 is modified to Phosphothreonine. Basic and acidic residues predominate over residues 856–874 (LERPDSMGDGEAGKSEPGN). 4 disordered regions span residues 856–876 (LERP…GNKE), 1269–1307 (RPEQ…ASNS), 1399–1465 (ANSN…IKQP), and 1521–1554 (LRIS…SNQE). Over residues 1272–1287 (QVQTADSSKVTTSSLP) the composition is skewed to polar residues. The segment covering 1426–1452 (SPSLSRTSSNTSAAPNASVPSPATAAS) has biased composition (low complexity). A compositionally biased stretch (basic and acidic residues) spans 1454–1463 (SEEKSKERIK). A PIPK domain is found at 1473–1796 (AFQDHSCQFQ…RFIDAMDRYF (324 aa)). Serine 1530 is modified (phosphoserine). Positions 1552-1809 (NQEEDARIAL…PDRWEGLSKV (258 aa)) are catalytic.

Zn(2+) serves as cofactor.

The protein localises to the endosome membrane. It catalyses the reaction a 1,2-diacyl-sn-glycero-3-phospho-(1D-myo-inositol-3-phosphate) + ATP = a 1,2-diacyl-sn-glycero-3-phospho-(1D-myo-inositol-3,5-bisphosphate) + ADP + H(+). Regulates both the synthesis and turnover of phosphatidylinositol 3,5-bisphosphate (1,2-diacyl-sn-glycero-3-phospho-(1D-myo-inositol-3,5-bisphosphate) or PtdIns(3,5)P2). Catalyzes the phosphorylation of phosphatidylinositol 3-phosphate (1,2-diacyl-sn-glycero-3-phospho-(1D-myo-inositol-3-phosphate)) on the fifth hydroxyl of the myo-inositol ring, to form PtdIns(3,5)P2. Required for endocytic-vacuolar pathway and nuclear migration. Has a role at a late stage in endosome-related membrane trafficking, at a point when signal termination has occurred. Is not required for receptor silencing. The protein is Putative 1-phosphatidylinositol 3-phosphate 5-kinase (fab1) of Drosophila melanogaster (Fruit fly).